A 238-amino-acid chain; its full sequence is Ribonuclease 3 (238 aa).

The 128-residue stretch at 8 to 135 (VAELERRIGY…LIAALYIDGG (128 aa)) folds into the RNase III domain. Glu-48 is a Mg(2+) binding site. Asp-52 is an active-site residue. Residues Asp-121 and Glu-124 each contribute to the Mg(2+) site. Residue Glu-124 is part of the active site. Residues 161 to 230 (DPKTQLQEWV…AQCMLLKREG (70 aa)) form the DRBM domain.

This sequence belongs to the ribonuclease III family. As to quaternary structure, homodimer. The cofactor is Mg(2+).

The protein resides in the cytoplasm. The enzyme catalyses Endonucleolytic cleavage to 5'-phosphomonoester.. Its function is as follows. Digests double-stranded RNA. Involved in the processing of primary rRNA transcript to yield the immediate precursors to the large and small rRNAs (23S and 16S). Processes some mRNAs, and tRNAs when they are encoded in the rRNA operon. Processes pre-crRNA and tracrRNA of type II CRISPR loci if present in the organism. This Phenylobacterium zucineum (strain HLK1) protein is Ribonuclease 3.